The primary structure comprises 103 residues: Large ribosomal subunit protein bL21 (103 aa).

It belongs to the bacterial ribosomal protein bL21 family. Part of the 50S ribosomal subunit. Contacts protein L20.

This protein binds to 23S rRNA in the presence of protein L20. The polypeptide is Large ribosomal subunit protein bL21 (Mycobacteroides abscessus (strain ATCC 19977 / DSM 44196 / CCUG 20993 / CIP 104536 / JCM 13569 / NCTC 13031 / TMC 1543 / L948) (Mycobacterium abscessus)).